Consider the following 123-residue polypeptide: uncharacterized protein (123 aa).

Polar residues predominate over residues 1-12 (MALNNVSLSSGD). 2 disordered regions span residues 1–25 (MALN…SHGD) and 53–91 (PRQA…RFSP). Residues 61–82 (VRAESRRVDGGGRSPREPDGRG) are compositionally biased toward basic and acidic residues.

This is an uncharacterized protein from Homo sapiens (Human).